We begin with the raw amino-acid sequence, 166 residues long: Interferon gamma (166 aa).

Residues 1–23 form the signal peptide; sequence MKYTSYILALQLCVLLGFSGSYG. Gln24 carries the pyrrolidone carboxylic acid modification. Residues Asn39 and Asn106 are each glycosylated (N-linked (GlcNAc...) asparagine).

The protein belongs to the type II (or gamma) interferon family. As to quaternary structure, homodimer. Interacts with IFNGR1 (via extracellular domain); this interaction promotes IFNGR1 dimerization. As to expression, released primarily from activated T lymphocytes.

Its subcellular location is the secreted. In terms of biological role, type II interferon produced by immune cells such as T-cells and NK cells that plays crucial roles in antimicrobial, antiviral, and antitumor responses by activating effector immune cells and enhancing antigen presentation. Primarily signals through the JAK-STAT pathway after interaction with its receptor IFNGR1 to affect gene regulation. Upon IFNG binding, IFNGR1 intracellular domain opens out to allow association of downstream signaling components JAK2, JAK1 and STAT1, leading to STAT1 activation, nuclear translocation and transcription of IFNG-regulated genes. Many of the induced genes are transcription factors such as IRF1 that are able to further drive regulation of a next wave of transcription. Plays a role in class I antigen presentation pathway by inducing a replacement of catalytic proteasome subunits with immunoproteasome subunits. In turn, increases the quantity, quality, and repertoire of peptides for class I MHC loading. Increases the efficiency of peptide generation also by inducing the expression of activator PA28 that associates with the proteasome and alters its proteolytic cleavage preference. Up-regulates as well MHC II complexes on the cell surface by promoting expression of several key molecules such as cathepsins B/CTSB, H/CTSH, and L/CTSL. Participates in the regulation of hematopoietic stem cells during development and under homeostatic conditions by affecting their development, quiescence, and differentiation. This chain is Interferon gamma (IFNG), found in Cervus elaphus (Red deer).